A 326-amino-acid polypeptide reads, in one-letter code: Zona pellucida-binding protein 2 (326 aa).

The signal sequence occupies residues 1–20 (MLAWALLSAVLWSLAGVGSA). 3 N-linked (GlcNAc...) asparagine glycosylation sites follow: N86, N220, and N256.

The protein belongs to the zona pellucida-binding protein Sp38 family. In terms of processing, N-glycosylated.

The protein resides in the secreted. It localises to the cytoplasmic vesicle. It is found in the secretory vesicle. The protein localises to the acrosome. Is implicated in sperm-oocyte interaction during fertilization. The protein is Zona pellucida-binding protein 2 (Zpbp2) of Rattus norvegicus (Rat).